Consider the following 237-residue polypeptide: Ribosomal RNA small subunit methyltransferase G (237 aa).

S-adenosyl-L-methionine-binding positions include G78, F83, 129 to 130 (AE), and R148. Residues 216 to 237 (SKKKETPNKYPRKAGTPNKKPL) form a disordered region.

It belongs to the methyltransferase superfamily. RNA methyltransferase RsmG family.

The protein localises to the cytoplasm. Specifically methylates the N7 position of a guanine in 16S rRNA. In Streptococcus agalactiae serotype V (strain ATCC BAA-611 / 2603 V/R), this protein is Ribosomal RNA small subunit methyltransferase G.